A 295-amino-acid chain; its full sequence is Acetylglutamate kinase (295 aa).

Substrate contacts are provided by residues 61–62 (GG), R83, and N187.

It belongs to the acetylglutamate kinase family. ArgB subfamily.

It localises to the cytoplasm. It catalyses the reaction N-acetyl-L-glutamate + ATP = N-acetyl-L-glutamyl 5-phosphate + ADP. It participates in amino-acid biosynthesis; L-arginine biosynthesis; N(2)-acetyl-L-ornithine from L-glutamate: step 2/4. Functionally, catalyzes the ATP-dependent phosphorylation of N-acetyl-L-glutamate. The sequence is that of Acetylglutamate kinase from Methanocorpusculum labreanum (strain ATCC 43576 / DSM 4855 / Z).